Reading from the N-terminus, the 191-residue chain is UPF0669 protein C6orf120 (191 aa).

The N-terminal stretch at 1–30 (MAAPRGRAAPWTTALLLLLASQVLSPGSCA) is a signal peptide. N-linked (GlcNAc...) asparagine glycosylation occurs at Asn-53.

This sequence belongs to the UPF0669 family. In terms of tissue distribution, mainly expressed in hepatocytes and some weak expression in germinal center cells of lymph nodes.

The protein localises to the secreted. Functionally, may be involved in induction of apoptosis in CD4(+) T-cells, but not CD8(+) T-cells or hepatocytes. The sequence is that of UPF0669 protein C6orf120 (C6orf120) from Homo sapiens (Human).